Reading from the N-terminus, the 354-residue chain is MTPTTTTAELTTEFDYDEDATPCVFTDVLNQSKPVTLFLYGVVFLFGSIGNFLVIFTITWRRRIQCSGDVYFINLAAADLLFVCTLPLWMQYLLDHNSLASVPCTLLTACFYVAMFASLCFITEIALDRYYAIVYMRYRPVKQACLFSIFWWIFAVIIAIPHFMVVTKKDNQCMTDYDYLEVSYPIILNVELMLGAFVIPLSVISYCYYRISRIVAVSQSRHKGRIVRVLIAVVLVFIIFWLPYHLTLFVDTLKLLKWISSSCEFERSLKRALILTESLAFCHCCLNPLLYVFVGTKFRQELHCLLAEFRQRLFSRDVSWYHSMSFSRRGSPSRRETSSDTLSDEVCRVSQIIP.

The Extracellular portion of the chain corresponds to 1-37; that stretch reads MTPTTTTAELTTEFDYDEDATPCVFTDVLNQSKPVTL. Asparagine 30 is a glycosylation site (N-linked (GlcNAc...) asparagine; by host). A helical transmembrane segment spans residues 38–58; the sequence is FLYGVVFLFGSIGNFLVIFTI. At 59–69 the chain is on the cytoplasmic side; sequence TWRRRIQCSGD. Residues 70–90 traverse the membrane as a helical segment; it reads VYFINLAAADLLFVCTLPLWM. Residues 91–101 lie on the Extracellular side of the membrane; it reads QYLLDHNSLAS. Residues 102-122 traverse the membrane as a helical segment; the sequence is VPCTLLTACFYVAMFASLCFI. Over 123-145 the chain is Cytoplasmic; the sequence is TEIALDRYYAIVYMRYRPVKQAC. The helical transmembrane segment at 146 to 166 threads the bilayer; that stretch reads LFSIFWWIFAVIIAIPHFMVV. At 167-183 the chain is on the extracellular side; the sequence is TKKDNQCMTDYDYLEVS. Residues 184–204 traverse the membrane as a helical segment; that stretch reads YPIILNVELMLGAFVIPLSVI. Over 205–228 the chain is Cytoplasmic; it reads SYCYYRISRIVAVSQSRHKGRIVR. Residues 229-249 traverse the membrane as a helical segment; that stretch reads VLIAVVLVFIIFWLPYHLTLF. Over 250 to 273 the chain is Extracellular; it reads VDTLKLLKWISSSCEFERSLKRAL. Residues 274–294 form a helical membrane-spanning segment; that stretch reads ILTESLAFCHCCLNPLLYVFV. Residues 295 to 354 are Cytoplasmic-facing; that stretch reads GTKFRQELHCLLAEFRQRLFSRDVSWYHSMSFSRRGSPSRRETSSDTLSDEVCRVSQIIP.

Belongs to the G-protein coupled receptor 1 family. As to quaternary structure, interacts with host GPRASP1; this interaction targets US28 to lysosomes for degradation. Interacts with host CX3CL1/Fractalkine (via N-terminus). In terms of processing, phosphorylated. High phosphorylation occurs concomitantly with receptor endocytosis and correlate with low receptor presence at the plasma membrane.

It localises to the host cell membrane. In terms of biological role, receptor for a C-C type chemokine. Binds to a great number of different CC-chemokines including CCL5/RANTES, CCL2/MCP-1, CCL3/MIP-1-alpha as well as CX3CL1/Fractalkine. Transduces signals resulting in the activation of MAP kinase signaling pathways and augmentation of intracellular calcium ion levels, leading to alterations in chemotactic behavior of vascular smooth muscle cells and macrophages. The US28 receptor also exhibits high levels of agonist-independent signaling activity and agonist-independent endocytosis. Interacts with the host Gi complex without activating it, thereby probably interfering with the chemokine-Gi signaling. May also function as a G protein sink to sequester G protein from the cell surface via internalization. Interacts with endogenous Gaq/11 subunits and thereby constitutively activates phospholipase C. The sequence is that of Envelope protein US28 (US28) from Human cytomegalovirus (strain Merlin) (HHV-5).